The chain runs to 138 residues: uncharacterized protein (138 aa).

Position 110 is a phosphoserine (Ser-110).

Its subcellular location is the cytoplasm. The protein localises to the nucleus. This is an uncharacterized protein from Schizosaccharomyces pombe (strain 972 / ATCC 24843) (Fission yeast).